Reading from the N-terminus, the 575-residue chain is Muellerian-inhibiting factor (575 aa).

Residues 1–20 form the signal peptide; it reads MQGPSLSQLVLVLMGALLEA. Positions 21-466 are excised as a propeptide; that stretch reads GTPREEVSST…ERSGPARAQR (446 aa). 2 N-linked (GlcNAc...) asparagine glycosylation sites follow: Asn78 and Asn343. 3 disulfide bridges follow: Cys477–Cys541, Cys503–Cys572, and Cys507–Cys574.

It belongs to the TGF-beta family. In terms of assembly, homodimer; disulfide-linked. Post-translationally, preproprotein is proteolytically processed to generate N- and C-terminal cleavage products that homodimerize and associate to form a biologically active non-covalent complex. Binding of the non-covalent complex to AMHR2 induces dissociation of the pro-region from the mature C-terminal dimer. The N-terminal portion of the protein, despite having no intrinsic activity, has the role of amplifying the activity of the C-terminus. In terms of tissue distribution, detected in fetal Sertoli cells. Expressed in granulosa cells of growing follicles but also in theca cells of preovulatory follicles and corpora lutea (at protein level).

The protein resides in the secreted. Plays an important role in several reproductive functions. Induces Muellerian duct regression during male fetal sexual differentiation and plays a role in Leydig cell differentiation and function. In female acts as a negative regulator of the primordial to primary follicle transition and decreases FSH sensitivity of growing follicles. AMH signals by binding to a specific type-II receptor, AMHR2, that heterodimerizes with type-I receptors (ACVR1 and BMPR1A), and recruiting SMAD proteins that are translocated to the nucleus to regulate target gene expression. The polypeptide is Muellerian-inhibiting factor (AMH) (Sus scrofa (Pig)).